A 142-amino-acid polypeptide reads, in one-letter code: Small ribosomal subunit protein bS6 (142 aa).

Residues 110–133 are compositionally biased toward basic and acidic residues; the sequence is NKKPSHAKEKHEKTEHTHSHHLEE. Residues 110–142 form a disordered region; sequence NKKPSHAKEKHEKTEHTHSHHLEEAESVGSHSE.

This sequence belongs to the bacterial ribosomal protein bS6 family.

Its function is as follows. Binds together with bS18 to 16S ribosomal RNA. This Helicobacter pylori (strain HPAG1) protein is Small ribosomal subunit protein bS6.